The following is a 678-amino-acid chain: DNA ligase (678 aa).

NAD(+)-binding positions include 47 to 51 (DSDYD), 96 to 97 (SL), and Glu122. The N6-AMP-lysine intermediate role is filled by Lys124. Residues Arg145, Glu182, Lys300, and Lys324 each contribute to the NAD(+) site. Zn(2+) is bound by residues Cys418, Cys421, Cys436, and Cys442. Residues 602–678 (AYNESFTGKT…ILEDNLKDLL (77 aa)) enclose the BRCT domain.

This sequence belongs to the NAD-dependent DNA ligase family. LigA subfamily. Mg(2+) is required as a cofactor. Requires Mn(2+) as cofactor.

The enzyme catalyses NAD(+) + (deoxyribonucleotide)n-3'-hydroxyl + 5'-phospho-(deoxyribonucleotide)m = (deoxyribonucleotide)n+m + AMP + beta-nicotinamide D-nucleotide.. Functionally, DNA ligase that catalyzes the formation of phosphodiester linkages between 5'-phosphoryl and 3'-hydroxyl groups in double-stranded DNA using NAD as a coenzyme and as the energy source for the reaction. It is essential for DNA replication and repair of damaged DNA. This is DNA ligase from Francisella tularensis subsp. holarctica (strain OSU18).